Here is a 118-residue protein sequence, read N- to C-terminus: MSRVKRGVTARARHKKVLNQAKGYYGARSRVYRVAKQAVIKAGQYAYRDRKVKKRTFRSLWIVRINAAARQHDISYSQLINGLNKADVELDRKALAELAVYNKDAFAAVVEKAKAALA.

Belongs to the bacterial ribosomal protein bL20 family.

Binds directly to 23S ribosomal RNA and is necessary for the in vitro assembly process of the 50S ribosomal subunit. It is not involved in the protein synthesizing functions of that subunit. This Francisella tularensis subsp. holarctica (strain FTNF002-00 / FTA) protein is Large ribosomal subunit protein bL20.